A 160-amino-acid polypeptide reads, in one-letter code: Probable nucleoside diphosphate kinase DDB_G0292928 (160 aa).

Positions 12, 61, 103, 109, 122, and 132 each coordinate ATP. The Pros-phosphohistidine intermediate role is filled by H135.

This sequence belongs to the NDK family. Mg(2+) is required as a cofactor.

The enzyme catalyses a 2'-deoxyribonucleoside 5'-diphosphate + ATP = a 2'-deoxyribonucleoside 5'-triphosphate + ADP. The catalysed reaction is a ribonucleoside 5'-diphosphate + ATP = a ribonucleoside 5'-triphosphate + ADP. The polypeptide is Probable nucleoside diphosphate kinase DDB_G0292928 (Dictyostelium discoideum (Social amoeba)).